Consider the following 160-residue polypeptide: Transcriptional repressor NrdR (160 aa).

Residues 1 to 11 (MRCPSCNSLDT) are compositionally biased toward polar residues. The interval 1–20 (MRCPSCNSLDTQVKDSRPTE) is disordered. A zinc finger spans residues 3-34 (CPSCNSLDTQVKDSRPTEDSAVIRRRRVCMAC). Residues 49-139 (LTVIKRNGRR…VYRNFREAKD (91 aa)) form the ATP-cone domain.

Belongs to the NrdR family. Zn(2+) serves as cofactor.

Negatively regulates transcription of bacterial ribonucleotide reductase nrd genes and operons by binding to NrdR-boxes. This is Transcriptional repressor NrdR from Nitrobacter winogradskyi (strain ATCC 25391 / DSM 10237 / CIP 104748 / NCIMB 11846 / Nb-255).